A 794-amino-acid polypeptide reads, in one-letter code: 6-hydroxypseudooxynicotine dehydrogenase complex subunit gamma (794 aa).

In terms of assembly, heterohexamer of 2 alpha (kdhA), 2 beta (kdhB) and 2 gamma (kdhC) subunit. Dimer of heterotrimers. It depends on Mo-molybdopterin cytosine dinucleotide as a cofactor.

The enzyme catalyses 6-hydroxypseudooxynicotine + A + H2O = 2,6-dihydroxypseudooxynicotine + AH2. It participates in alkaloid degradation; nicotine degradation. Molybdo-flavoprotein enzyme complex involved in nicotine degradation. The subunit gamma (large subunit) contains the substrate-binding sites, the subunit alpha (medium subunit) binds FAD and the subunit beta (small subunit) has a 2Fe-2S ferredoxin-type domain which binds 2 2Fe-2S clusters. This chain is 6-hydroxypseudooxynicotine dehydrogenase complex subunit gamma (kdhC), found in Paenarthrobacter nicotinovorans (Arthrobacter nicotinovorans).